The sequence spans 105 residues: Guanidinium exporter (105 aa).

A helical membrane pass occupies residues 1 to 21 (MSWIILLIAGLLEVVWAVGLK). Over 22-28 (YTHGFSR) the chain is Cytoplasmic. Residues 29 to 49 (LTPSIITITAMVISMALLSWA) form a helical membrane-spanning segment. The Periplasmic portion of the chain corresponds to 50 to 57 (MKTLPVGT). Residues 58 to 78 (AYAIWTGIGAVGAAITGILLL) traverse the membrane as a helical segment. Residues 79 to 81 (GES) are Cytoplasmic-facing. Residues 82–102 (ASPARLLSLGLIVAGIIGLKL) form a helical membrane-spanning segment. Over 103-105 (SAH) the chain is Periplasmic.

It belongs to the drug/metabolite transporter (DMT) superfamily. Small multidrug resistance (SMR) (TC 2.A.7.1) family. Gdx/SugE subfamily.

The protein localises to the cell inner membrane. Its function is as follows. Guanidinium ion exporter. Couples guanidinium export to the proton motive force, exchanging one guanidinium ion for two protons. This is Guanidinium exporter from Salmonella typhi.